Here is a 1325-residue protein sequence, read N- to C-terminus: SCAN domain-containing protein 3 (1325 aa).

Positions 52 to 134 constitute an SCAN box domain; sequence RQRFRQFCYQ…TLLEDLEREL (83 aa). Residues 246 to 275 adopt a coiled-coil conformation; the sequence is KAKYCQLIKEVKEAKAKAKKESVDYRRLAR. An Integrase catalytic domain is found at 366–526; it reads KSIKEVSSRC…TPCESAFSSE (161 aa). Residues 542-568 are a coiled coil; the sequence is ASLHTENELDQADKELENTLRAQYEEN.

Weakly expressed in the lung (at protein level).

The protein localises to the nucleus. The sequence is that of SCAN domain-containing protein 3 from Homo sapiens (Human).